Reading from the N-terminus, the 326-residue chain is GTP 3',8-cyclase (326 aa).

Residues 6–220 (SFGRRINYLR…DRISASYELE (215 aa)) form the Radical SAM core domain. A GTP-binding site is contributed by R15. 2 residues coordinate [4Fe-4S] cluster: C22 and C26. Y28 is a binding site for S-adenosyl-L-methionine. A [4Fe-4S] cluster-binding site is contributed by C29. R65 is a GTP binding site. S-adenosyl-L-methionine is bound at residue G69. Residue T96 participates in GTP binding. S120 lines the S-adenosyl-L-methionine pocket. Residue K157 participates in GTP binding. M191 contributes to the S-adenosyl-L-methionine binding site. [4Fe-4S] cluster contacts are provided by C254 and C257. Position 259–261 (259–261 (RVR)) interacts with GTP. C271 is a binding site for [4Fe-4S] cluster.

This sequence belongs to the radical SAM superfamily. MoaA family. Monomer and homodimer. [4Fe-4S] cluster is required as a cofactor.

It carries out the reaction GTP + AH2 + S-adenosyl-L-methionine = (8S)-3',8-cyclo-7,8-dihydroguanosine 5'-triphosphate + 5'-deoxyadenosine + L-methionine + A + H(+). The protein operates within cofactor biosynthesis; molybdopterin biosynthesis. Catalyzes the cyclization of GTP to (8S)-3',8-cyclo-7,8-dihydroguanosine 5'-triphosphate. This Geobacter sulfurreducens (strain ATCC 51573 / DSM 12127 / PCA) protein is GTP 3',8-cyclase.